Reading from the N-terminus, the 147-residue chain is Flagellar assembly factor FliW (147 aa).

This sequence belongs to the FliW family. As to quaternary structure, interacts with translational regulator CsrA and flagellin(s).

It localises to the cytoplasm. Its function is as follows. Acts as an anti-CsrA protein, binds CsrA and prevents it from repressing translation of its target genes, one of which is flagellin. Binds to flagellin and participates in the assembly of the flagellum. This is Flagellar assembly factor FliW from Oceanobacillus iheyensis (strain DSM 14371 / CIP 107618 / JCM 11309 / KCTC 3954 / HTE831).